Consider the following 369-residue polypeptide: uncharacterized protein (369 aa).

Positions alanine 110 to alanine 121 are enriched in low complexity. A disordered region spans residues alanine 110–alanine 172. Residues proline 122–alanine 136 show a composition bias toward pro residues.

This is an uncharacterized protein from Lymantria dispar multicapsid nuclear polyhedrosis virus (LdMNPV).